A 215-amino-acid polypeptide reads, in one-letter code: Probable glutathione S-transferase GSTF2 (215 aa).

Positions 2–83 (APMKLYGSTL…YVCRKNKPEL (82 aa)) constitute a GST N-terminal domain. Glutathione is bound by residues Ser-12, 41–42 (HK), 54–55 (QV), and 67–68 (ES). The GST C-terminal domain maps to 88 to 215 (DLKESAMVDV…KVASLMKPPA (128 aa)).

Belongs to the GST superfamily. Phi family. Constitutively expressed in roots. Expressed in anthers, callus, panicles, sheaths and stems (at protein level).

It carries out the reaction RX + glutathione = an S-substituted glutathione + a halide anion + H(+). Functionally, conjugation of reduced glutathione to a wide number of exogenous and endogenous hydrophobic electrophiles. This chain is Probable glutathione S-transferase GSTF2 (GSTF2), found in Oryza sativa subsp. japonica (Rice).